We begin with the raw amino-acid sequence, 601 residues long: Deuterosome assembly protein 1 (601 aa).

3 coiled-coil regions span residues 14–59, 86–197, and 226–278; these read CEAE…NAQT, TQNY…KQQR, and IEKL…LQSR. 2 disordered regions span residues 115–135 and 188–213; these read MKQN…PFEL and QTQL…CESS. A compositionally biased stretch (basic and acidic residues) spans 121–131; it reads HRKEASNKDET. The interval 307 to 326 is disordered; the sequence is DNRKRVESSYSPSTKEPERK. A coiled-coil region spans residues 340–397; it reads HEKELNKMRSQLYQEEDLCSEQERMRNEISELTQELHQKEVTIATIMKKAALLERQLK. The residue at position 544 (Ser544) is a Phosphoserine. A coiled-coil region spans residues 555–586; that stretch reads AAQHFLMEEEKRAKELEKLLNTHIDELQRHTE.

Belongs to the CEP63 family. In terms of assembly, interacts with CEP152; the interaction is mutually exclusive with CEP63.

The protein localises to the cytoplasm. In terms of biological role, key structural component of the deuterosome, a structure that promotes de novo centriole amplification in multiciliated cells. Deuterosome-mediated centriole amplification occurs in terminally differentiated multiciliated cells and can generate more than 100 centrioles. Probably sufficient for the specification and formation of the deuterosome inner core. Interacts with CEP152 and recruits PLK4 to activate centriole biogenesis. This Rattus norvegicus (Rat) protein is Deuterosome assembly protein 1.